We begin with the raw amino-acid sequence, 334 residues long: Cathepsin R (334 aa).

Residues 1 to 17 (MAAVVFIAFLYLGVASG) form the signal peptide. Residues 18–114 (VPVLDSSLDA…SIMKREAGSI (97 aa)) constitute a propeptide, activation peptide. Disulfide bonds link Cys-136–Cys-179 and Cys-170–Cys-212. The active site involves Cys-139. Asn-269 carries an N-linked (GlcNAc...) asparagine glycan. Cys-270 and Cys-323 are oxidised to a cystine. Residues His-277 and Asn-301 contribute to the active site.

Belongs to the peptidase C1 family. In terms of tissue distribution, placenta.

It is found in the lysosome. This chain is Cathepsin R (Ctsr), found in Mus musculus (Mouse).